The chain runs to 300 residues: ETS homologous factor (300 aa).

Residues 29–115 (PTCNVSSGFF…SNLQHLKWNG (87 aa)) enclose the PNT domain. Residues 181 to 203 (VAESPDMKKEQDHPVKSHTKKHN) form a disordered region. Residues 185 to 195 (PDMKKEQDHPV) show a composition bias toward basic and acidic residues. The segment at residues 207 to 289 (THLWEFIRDI…DGRRLVYKFG (83 aa)) is a DNA-binding region (ETS).

Belongs to the ETS family. As to expression, highly expressed in kidney and lung, weakly in skeletal muscle, heart, and liver, and not detected in brain, spleen or testis.

The protein localises to the nucleus. Transcriptional activator that may play a role in regulating epithelial cell differentiation and proliferation. May act as a repressor for a specific subset of ETS/AP-1-responsive genes, and as a modulator of the nuclear response to mitogen-activated protein kinase signaling cascades. Binds to DNA sequences containing the consensus nucleotide core sequence GGAA. Involved in regulation of TNFRSF10B/DR5 expression through Ets-binding sequences on the TNFRSF10B/DR5 promoter. The protein is ETS homologous factor of Mus musculus (Mouse).